The primary structure comprises 541 residues: Phosphoenolpyruvate carboxykinase (ATP) (541 aa).

Residues Arg64, Tyr206, and Lys212 each contribute to the substrate site. Residues Lys212, His231, and 247–255 each bind ATP; that span reads GLSGTGKTT. Mn(2+)-binding residues include Lys212 and His231. Asp268 serves as a coordination point for Mn(2+). Positions 296, 332, and 454 each coordinate ATP. Arg332 lines the substrate pocket.

This sequence belongs to the phosphoenolpyruvate carboxykinase (ATP) family. As to quaternary structure, monomer. It depends on Mn(2+) as a cofactor.

Its subcellular location is the cytoplasm. The enzyme catalyses oxaloacetate + ATP = phosphoenolpyruvate + ADP + CO2. It participates in carbohydrate biosynthesis; gluconeogenesis. Its function is as follows. Involved in the gluconeogenesis. Catalyzes the conversion of oxaloacetate (OAA) to phosphoenolpyruvate (PEP) through direct phosphoryl transfer between the nucleoside triphosphate and OAA. In Wigglesworthia glossinidia brevipalpis, this protein is Phosphoenolpyruvate carboxykinase (ATP).